Reading from the N-terminus, the 253-residue chain is Sulfate transporter CysZ (253 aa).

A run of 4 helical transmembrane segments spans residues 31–51 (FVIL…WWLF), 72–92 (LSYL…GYFF), 151–171 (IVLL…PVLW), and 222–242 (IPVL…AMWV).

The protein belongs to the CysZ family.

The protein localises to the cell inner membrane. Functionally, possibly involved in sulfate transport. Its function is as follows. High affinity, high specificity proton-dependent sulfate transporter, which mediates sulfate uptake. Provides the sulfur source for the cysteine synthesis pathway. This is Sulfate transporter CysZ from Salmonella typhimurium (strain LT2 / SGSC1412 / ATCC 700720).